We begin with the raw amino-acid sequence, 106 residues long: ATP-dependent Clp protease adapter protein ClpS (106 aa).

The protein belongs to the ClpS family. Binds to the N-terminal domain of the chaperone ClpA.

Involved in the modulation of the specificity of the ClpAP-mediated ATP-dependent protein degradation. This chain is ATP-dependent Clp protease adapter protein ClpS, found in Vibrio vulnificus (strain CMCP6).